The following is a 900-amino-acid chain: Minor teichoic acid biosynthesis protein GgaB (900 aa).

Belongs to the glycosyltransferase 2 family.

The protein operates within cell wall biogenesis; poly(glucopyranosyl N-acetylgalactosamine 1-phosphate) teichoic acid biosynthesis. Functionally, involved in the biosynthesis of galactosamine-containing minor teichoic acid, a non-essential cell wall polymer in B.subtilis 168. The protein is Minor teichoic acid biosynthesis protein GgaB (ggaB) of Bacillus subtilis (strain 168).